An 889-amino-acid polypeptide reads, in one-letter code: Protein SEY1 homolog (889 aa).

Residues 1–801 (MDTKTQIIDY…ETGAKMSLKN (801 aa)) are Cytoplasmic-facing. The region spanning 31-277 (GFNYNVIAIL…IPSDGFAHYC (247 aa)) is the GB1/RHD3-type G domain. Residue 41–48 (GSQSSGKS) participates in GTP binding. A disordered region spans residues 429–449 (RKDGKGGSSPSAGDKKDTKDT). Positions 679–699 (LDEIMDVLKSKLDEISDNLSS) form a coiled coil. The helical transmembrane segment at 802–822 (VPLFFWVILLILGWNELLFFT) threads the bilayer. Residues 823–825 (RFF) lie on the Lumenal side of the membrane. Residues 826-846 (FRLNIILPLFLAAAVILSTLV) form a helical membrane-spanning segment. The Cytoplasmic portion of the chain corresponds to 847–889 (FNGNMEVLSIINKAVFFLAKNSFGVYRQLQAMGGKAAQGAAAD).

Belongs to the TRAFAC class dynamin-like GTPase superfamily. GB1/RHD3 GTPase family. RHD3 subfamily.

It localises to the endoplasmic reticulum membrane. Probable GTP-binding protein involved in generating and maintaining the structure of the tubular endoplasmic reticulum network. The polypeptide is Protein SEY1 homolog (Plasmodium vivax (strain Salvador I)).